The primary structure comprises 829 residues: Leucine--tRNA ligase (829 aa).

Positions 40–51 match the 'HIGH' region motif; that stretch reads PYPSGAGLHVGH. Residues 609–613 carry the 'KMSKS' region motif; that stretch reads KMSKS. Lysine 612 serves as a coordination point for ATP.

It belongs to the class-I aminoacyl-tRNA synthetase family.

The protein resides in the cytoplasm. The catalysed reaction is tRNA(Leu) + L-leucine + ATP = L-leucyl-tRNA(Leu) + AMP + diphosphate. The chain is Leucine--tRNA ligase from Lactococcus lactis subsp. lactis (strain IL1403) (Streptococcus lactis).